A 561-amino-acid polypeptide reads, in one-letter code: Putative transport protein YbjL (561 aa).

5 helical membrane-spanning segments follow: residues 8-28 (LLNGNYILLLFVVLALGLCLG), 32-52 (LGSIQLGNSIGVLVVSLLLGQ), 66-86 (FMLFIFCVGVEAGPNFFSIFF), 94-114 (MLALVMVGSALVIALGLGKLF), and 158-178 (NLSLGYALTYLIGLVSLIVGA). RCK C-terminal domains are found at residues 200 to 288 (RGLD…SFRN) and 292 to 373 (VFDR…RIGF). 5 helical membrane-spanning segments follow: residues 383 to 403 (LLAFCAFFVIGLMIGMITFQF), 406 to 426 (FSFGMGNAAGLLFAGIMLGFM), 451 to 471 (VFMAGVGLSAGSGINNGLGAI), 475 to 495 (MLIAGLIVSLVPVVICFLFGA), and 540 to 560 (AIANVLLTLAGTIIVMVWPGL).

It belongs to the AAE transporter (TC 2.A.81) family. YbjL subfamily.

It localises to the cell membrane. The sequence is that of Putative transport protein YbjL from Escherichia coli O127:H6 (strain E2348/69 / EPEC).